A 366-amino-acid chain; its full sequence is Chorismate synthase (366 aa).

NADP(+)-binding residues include Arg-48 and Arg-54. FMN-binding positions include 125 to 127 (RSS), 238 to 239 (NA), Gly-278, 293 to 297 (KPTSS), and Arg-319.

Belongs to the chorismate synthase family. As to quaternary structure, homotetramer. FMNH2 serves as cofactor.

The enzyme catalyses 5-O-(1-carboxyvinyl)-3-phosphoshikimate = chorismate + phosphate. Its pathway is metabolic intermediate biosynthesis; chorismate biosynthesis; chorismate from D-erythrose 4-phosphate and phosphoenolpyruvate: step 7/7. In terms of biological role, catalyzes the anti-1,4-elimination of the C-3 phosphate and the C-6 proR hydrogen from 5-enolpyruvylshikimate-3-phosphate (EPSP) to yield chorismate, which is the branch point compound that serves as the starting substrate for the three terminal pathways of aromatic amino acid biosynthesis. This reaction introduces a second double bond into the aromatic ring system. This is Chorismate synthase from Neisseria meningitidis serogroup C / serotype 2a (strain ATCC 700532 / DSM 15464 / FAM18).